Consider the following 161-residue polypeptide: Cyclic pyranopterin monophosphate synthase (161 aa).

Substrate is bound by residues 73–75 (LCH) and 110–111 (ME). Aspartate 125 is an active-site residue.

Belongs to the MoaC family. Homohexamer; trimer of dimers.

The catalysed reaction is (8S)-3',8-cyclo-7,8-dihydroguanosine 5'-triphosphate = cyclic pyranopterin phosphate + diphosphate. Its pathway is cofactor biosynthesis; molybdopterin biosynthesis. Its function is as follows. Catalyzes the conversion of (8S)-3',8-cyclo-7,8-dihydroguanosine 5'-triphosphate to cyclic pyranopterin monophosphate (cPMP). The protein is Cyclic pyranopterin monophosphate synthase of Pseudomonas syringae pv. syringae (strain B728a).